Here is a 394-residue protein sequence, read N- to C-terminus: Elongation factor Tu (394 aa).

Residues 10-204 (KPHVNIGTIG…AVDSYIPQPV (195 aa)) form the tr-type G domain. The interval 19–26 (GHVDHGKT) is G1. 19 to 26 (GHVDHGKT) provides a ligand contact to GTP. Mg(2+) is bound at residue Thr-26. The segment at 60–64 (GITIS) is G2. Residues 81-84 (DCPG) are G3. Residues 81-85 (DCPGH) and 136-139 (NKVD) contribute to the GTP site. The interval 136–139 (NKVD) is G4. Residues 174-176 (SAL) form a G5 region.

It belongs to the TRAFAC class translation factor GTPase superfamily. Classic translation factor GTPase family. EF-Tu/EF-1A subfamily. In terms of assembly, monomer.

It is found in the cytoplasm. It catalyses the reaction GTP + H2O = GDP + phosphate + H(+). GTP hydrolase that promotes the GTP-dependent binding of aminoacyl-tRNA to the A-site of ribosomes during protein biosynthesis. The chain is Elongation factor Tu from Rickettsia montanensis.